The following is a 92-amino-acid chain: Small ribosomal subunit protein uS19 (92 aa).

This sequence belongs to the universal ribosomal protein uS19 family.

Protein S19 forms a complex with S13 that binds strongly to the 16S ribosomal RNA. This Roseobacter denitrificans (strain ATCC 33942 / OCh 114) (Erythrobacter sp. (strain OCh 114)) protein is Small ribosomal subunit protein uS19.